A 314-amino-acid polypeptide reads, in one-letter code: FHA domain-containing protein DDL (314 aa).

The span at 1–10 (MAPSSRSPSP) shows a compositional bias: low complexity. Residues 1–146 (MAPSSRSPSP…NVEEDSVARM (146 aa)) form a disordered region. Over residues 18–127 (ARGEKEIGRS…AIASRHDEGS (110 aa)) the composition is skewed to basic and acidic residues. S133 is subject to Phosphoserine. One can recognise an FHA domain in the interval 219–282 (YLFGRERRIA…NKTYINESPI (64 aa)).

Interacts with DCL1 (via N-terminus). In terms of tissue distribution, expressed in roots, lateral roots, vascular strands of roots and leaves, vegetative meristems, pollen and developing seeds.

It is found in the nucleus. In terms of biological role, involved in the microRNA (miRNA) and short interfering RNA (siRNA) biogenesis. May facilitate DCL1 to access or recognize primary miRNAs. Binds RNA non-specifically. This Arabidopsis thaliana (Mouse-ear cress) protein is FHA domain-containing protein DDL (DDL).